We begin with the raw amino-acid sequence, 226 residues long: Large ribosomal subunit protein uL1 (226 aa).

This sequence belongs to the universal ribosomal protein uL1 family. Part of the 50S ribosomal subunit.

In terms of biological role, binds directly to 23S rRNA. The L1 stalk is quite mobile in the ribosome, and is involved in E site tRNA release. Protein L1 is also a translational repressor protein, it controls the translation of the L11 operon by binding to its mRNA. The sequence is that of Large ribosomal subunit protein uL1 from Borrelia garinii subsp. bavariensis (strain ATCC BAA-2496 / DSM 23469 / PBi) (Borreliella bavariensis).